The primary structure comprises 325 residues: MTFAKITQVAHYVPENVVSNDDLSKIMDTNDEWIYSRTGIKNRHISTGENTSDLAAKVAKQLISDSNLSPETIDFIIVATVTPDSLMPSTAARVQAQVGAVNAFAYDLTAACSGFVFALSTAEKLISSGAYQRGLVIGAEVFSKVIDWSDRSTAVLFGDGAAGVLIEAGASQPLIIAEKMQTDGSRGNSLLSSYADIQTPFASVSYESSNLSMEGRAIFDFAVRDVPKNIQATLEKANLSAEEVDYYLLHQANSRILDKMAKKLGVTRQKFLQNMQEYGNTSAASIPILLSESVKNGIFSLDGQTKVVLTGFGGGLTWGTAIINL.

Catalysis depends on residues cysteine 112 and histidine 250. An ACP-binding region spans residues 251–255 (QANSR). The active site involves asparagine 280.

This sequence belongs to the thiolase-like superfamily. FabH family. In terms of assembly, homodimer.

The protein localises to the cytoplasm. It catalyses the reaction malonyl-[ACP] + acetyl-CoA + H(+) = 3-oxobutanoyl-[ACP] + CO2 + CoA. The protein operates within lipid metabolism; fatty acid biosynthesis. Functionally, catalyzes the condensation reaction of fatty acid synthesis by the addition to an acyl acceptor of two carbons from malonyl-ACP. Catalyzes the first condensation reaction which initiates fatty acid synthesis and may therefore play a role in governing the total rate of fatty acid production. Possesses both acetoacetyl-ACP synthase and acetyl transacylase activities. Its substrate specificity determines the biosynthesis of branched-chain and/or straight-chain of fatty acids. In Lactococcus lactis subsp. lactis (strain IL1403) (Streptococcus lactis), this protein is Beta-ketoacyl-[acyl-carrier-protein] synthase III.